We begin with the raw amino-acid sequence, 59 residues long: Potassium channel toxin alpha-KTx 15.2 (59 aa).

The N-terminal stretch at 1-22 (MKFSSIILLTLLICSMSKFGNC) is a signal peptide. Gln-23 is modified (pyrrolidone carboxylic acid). 3 disulfides stabilise this stretch: Cys-30/Cys-50, Cys-35/Cys-55, and Cys-39/Cys-57.

It belongs to the short scorpion toxin superfamily. Potassium channel inhibitor family. Alpha-KTx 15 subfamily. In terms of tissue distribution, expressed by the venom gland.

Its subcellular location is the secreted. Its function is as follows. Blocks both human ERG1/Kv11.1/KCNH2 potassium channels (in a reversible manner) and A-type voltage-gated potassium channels Kv4/KCND (in an irreversible manner). The presence of the Kv4-associated proteins DPP6 or DPP10 is mandatory to have high-affinity blockade of Kv4.2/KCND2 and Kv4.3/KCND3 channels. In contrast, the presence of the Kv4-associated protein KChIP1/KCNIP1 does not enhance the affinity blockade. May dispose of two functional faces (A and B); the two basic residues (Arg-40 and Lys-41) on the alpha-helix side of the peptide that blocks the hERG current (face A) and the typical dyad through which it blocks A-type currents on the beta-sheet side (face B). In adult rat brain, it binds to sites in the striatum, hippocampus, superior colliculus, and cerebellum. It shares the same target in rat brain than AaTX1 (AC Q867F4) and AmmTX3 (AC P60208). In DPP6 knockout mice, A-type currents are much less affected by the toxin than in wild-type mice. This is Potassium channel toxin alpha-KTx 15.2 from Olivierus martensii (Manchurian scorpion).